Reading from the N-terminus, the 351-residue chain is MTTLTLAELATITGGELFGDPTALVSAVAPMDKAQLGHVTFLSNPKYSKHLGDCKATVIMVKTSERELCPSNALVVADPYVAFAKVAQALDSTPSPAHGIAPSAVIAEDAKLGHNVSIGANAVIESGVQLGDNVVIGAGCFIGKQARLGDNTKLWANVTIYHKVEIGSDCLIQSGTVIGADGFGYANERGEWIKIPQLGSVRIGDRVEIGACTTIDRGALDDTVIEDNVIIDNQLQIAHNVHIGYGSALAGGTVIAGSTRIGKYCIIGGASVINGHIEIADGVTITGMGMVMRSIEEKGMYSSGIPLQTNKEWRKTAARVHRIDDMHKRLKALEKLLEQSDTVQPDNSQAE.

The active-site Proton acceptor is the His-239.

The protein belongs to the transferase hexapeptide repeat family. LpxD subfamily. As to quaternary structure, homotrimer.

It catalyses the reaction a UDP-3-O-[(3R)-3-hydroxyacyl]-alpha-D-glucosamine + a (3R)-hydroxyacyl-[ACP] = a UDP-2-N,3-O-bis[(3R)-3-hydroxyacyl]-alpha-D-glucosamine + holo-[ACP] + H(+). The protein operates within bacterial outer membrane biogenesis; LPS lipid A biosynthesis. Catalyzes the N-acylation of UDP-3-O-acylglucosamine using 3-hydroxyacyl-ACP as the acyl donor. Is involved in the biosynthesis of lipid A, a phosphorylated glycolipid that anchors the lipopolysaccharide to the outer membrane of the cell. The chain is UDP-3-O-acylglucosamine N-acyltransferase from Vibrio cholerae serotype O1 (strain ATCC 39315 / El Tor Inaba N16961).